Consider the following 450-residue polypeptide: MEASGTDDVEKLKSKFLSAWHNMKYSWVLKTKTYFKRNSPVFLLGKCYHFKYEDSSVTSDGGSNSGSESKEDLSGNVDEFRKDFISRIWLTYREEFPQIETSSWTTDCGWGCTLRTGQMLLAQGLIVHFLGRDWTWTEALDIFSSESEFWTANTARKLTPSLETSFSENNECVSSNKQPLHNCDKKSNSEDFHQKIISWFADYPLAYFGLHQLVKLGKNSGKVAGDWYGPAVVSHLLRKAIEESSDPELQGITIYVAQDCTIYSADVYDLQCNKGTEKAVVILVPVRLGGERTNMEYFEFVKGILSLEFCIGIIGGKPKQSYYFVGFQDDSLIYMDPHYCQSFVDVSVKNFPLESFHCPSPKKMSFKKMDPSCTIGFYCRNAREFEKAAEELTKVLKSSTKQNYPLFTFVNGHAQDFDFVCTPVYDQNDLFTEDEKKRLKRFSTEEFVLL.

C112 acts as the Nucleophile in catalysis. Catalysis depends on residues D336 and H338.

It belongs to the peptidase C54 family.

The protein resides in the cytoplasm. The enzyme catalyses [protein]-C-terminal L-amino acid-glycyl-phosphatidylethanolamide + H2O = [protein]-C-terminal L-amino acid-glycine + a 1,2-diacyl-sn-glycero-3-phosphoethanolamine. Cysteine protease that plays a key role in autophagy by mediating both proteolytic activation and delipidation of ATG8 family proteins. The protease activity is required for proteolytic activation of ATG8 family proteins: cleaves the C-terminal amino acid of ATG8 proteins to reveal a C-terminal glycine. Exposure of the glycine at the C-terminus is essential for ATG8 proteins conjugation to phosphatidylethanolamine (PE) and insertion to membranes, which is necessary for autophagy. In addition to the protease activity, also mediates delipidation of ATG8 family proteins. Catalyzes delipidation of PE-conjugated forms of ATG8 proteins during macroautophagy. In Xenopus tropicalis (Western clawed frog), this protein is Cysteine protease ATG4C.